A 196-amino-acid chain; its full sequence is MVAYKNIALLALTFTIASVESLSIVGARPYIDKALSVFDIKTPNSQSEKPEIILTFAGPDDKPVPGDSPIVQCEASVPQLLNLQSVVIDPNPPLRGENLTFVAKGVLSQDIEDGAYVEVDVRYGFIKLLHQTFDLCEEITKIDLECPISKGQQVIEKKVEIPAEVPPGKYIVSARAYTKDDIFITCLSAMVEFPPL.

The signal sequence occupies residues Met-1 to Ser-21. A propeptide spanning residues Leu-22–Asp-60 is cleaved from the precursor.

It belongs to the NPC2 family. As to quaternary structure, monomer.

Catalyzes the intermembrane transfer of phosphatidylglycerol and phosphatidylinositol. This chain is Phosphatidylglycerol/phosphatidylinositol transfer protein (NPC2), found in Debaryomyces hansenii (strain ATCC 36239 / CBS 767 / BCRC 21394 / JCM 1990 / NBRC 0083 / IGC 2968) (Yeast).